The sequence spans 84 residues: Control protein C.SmaI (84 aa).

The HTH cro/C1-type domain maps to 19-73; sequence VRSYRNINNLSQEQLAEISGLHRTYIGSVERKERNVTLSTLIILAKALNTSVPKL. The segment at residues 30 to 49 is a DNA-binding region (H-T-H motif); sequence QEQLAEISGLHRTYIGSVER.

Functionally, may control expression of its associated restriction-modification system SmaI. The polypeptide is Control protein C.SmaI (Serratia marcescens).